The following is a 241-amino-acid chain: Peroxisomal membrane protein 11C (241 aa).

Residues 1–122 (MALLNRLASA…ADAKVLRVDS (122 aa)) are Cytoplasmic-facing. The chain crosses the membrane as a helical span at residues 123 to 149 (AWWWTLNTALWTLSLLLGAVKALWTML). The Lumenal portion of the chain corresponds to 150 to 211 (KLRQKLRSPT…GVLWAGRFPP (62 aa)). Residues 212–227 (WLVGLMGTISSILSTC) traverse the membrane as a helical segment. The Cytoplasmic segment spans residues 228 to 241 (QAVRAGRQAEADSP).

Belongs to the peroxin-11 family. As to quaternary structure, homodimer. Heterodimer with either PEX11A or PEX11B. Interacts with FIS1. Expressed in liver and at much lower levels in heart, kidney and testis.

Its subcellular location is the peroxisome membrane. In terms of biological role, promotes membrane protrusion and elongation on the peroxisomal surface. The protein is Peroxisomal membrane protein 11C (Pex11g) of Mus musculus (Mouse).